The sequence spans 434 residues: Nicotinate phosphoribosyltransferase (434 aa).

H242 is subject to Phosphohistidine; by autocatalysis.

This sequence belongs to the NAPRTase family. In terms of processing, transiently phosphorylated on a His residue during the reaction cycle. Phosphorylation strongly increases the affinity for substrates and increases the rate of nicotinate D-ribonucleotide production. Dephosphorylation regenerates the low-affinity form of the enzyme, leading to product release.

It catalyses the reaction nicotinate + 5-phospho-alpha-D-ribose 1-diphosphate + ATP + H2O = nicotinate beta-D-ribonucleotide + ADP + phosphate + diphosphate. It participates in cofactor biosynthesis; NAD(+) biosynthesis; nicotinate D-ribonucleotide from nicotinate: step 1/1. Catalyzes the synthesis of beta-nicotinate D-ribonucleotide from nicotinate and 5-phospho-D-ribose 1-phosphate at the expense of ATP. The protein is Nicotinate phosphoribosyltransferase of Brucella melitensis biotype 1 (strain ATCC 23456 / CCUG 17765 / NCTC 10094 / 16M).